The sequence spans 367 residues: MGSLASERKVVGWAARDATGHLSPYSYTLRNTGPEDVVVKVLYCGICHTDIHQAKNHLGASKYPMVPGHEVVGEVVEVGPEVAKYGVGDVVGVGVIVGCCRECSPCKANVEQYCNKKIWSYNDVYTDGRPTQGGFASTMVVDQKFVVKIPAGLAPEQAAPLLCAGVTVYSPLKHFGLTNPGLRGGILGLGGVGHMGVKVAKAMGHHVTVISSSSKKRAEAMDHLGADAYLVSSDAAAMAAAADSLDYIIDTVPVHHPLEPYLALLKLDGKLVLLGVIGEPLSFVSPMVMLGRKAITGSFIGSIDETAEVLQFCVDKGLTSQIEVVKMGYVNEALERLERNDVRYRFVVDVAGSNVEAEAAAADAASN.

Residue Cys47 participates in Zn(2+) binding. Thr49 is an NADP(+) binding site. The Zn(2+) site is built by His69, Glu70, Cys100, Cys103, Cys106, Cys114, and Cys163. NADP(+) is bound by residues Thr167, Gly188–Gly193, Ser211–Lys216, Thr251, Gly275, and Ser298–Ile300.

It belongs to the zinc-containing alcohol dehydrogenase family. As to quaternary structure, homodimer. Requires Zn(2+) as cofactor.

It catalyses the reaction (E)-cinnamyl alcohol + NADP(+) = (E)-cinnamaldehyde + NADPH + H(+). It carries out the reaction (E)-coniferol + NADP(+) = (E)-coniferaldehyde + NADPH + H(+). The enzyme catalyses (E)-sinapyl alcohol + NADP(+) = (E)-sinapaldehyde + NADPH + H(+). The catalysed reaction is (E)-4-coumaroyl alcohol + NADP(+) = (E)-4-coumaraldehyde + NADPH + H(+). It catalyses the reaction (E)-caffeyl alcohol + NADP(+) = (E)-caffeyl aldehyde + NADPH + H(+). It functions in the pathway aromatic compound metabolism; phenylpropanoid biosynthesis. In terms of biological role, involved in lignin biosynthesis. May catalyze the final step specific for the production of lignin monomers, like coniferyl alcohol, sinapyl alcohol and 4-coumaryl alcohol. This Zea mays (Maize) protein is Probable cinnamyl alcohol dehydrogenase.